Reading from the N-terminus, the 295-residue chain is Sulfotransferase 1E1 (295 aa).

48-53 (KSGTTW) lines the 3'-phosphoadenylyl sulfate pocket. Residue 106-108 (KSH) participates in substrate binding. The active-site Proton acceptor is the His108. Residues Arg130, Ser138, and Tyr193 each contribute to the 3'-phosphoadenylyl sulfate site. Phosphoserine; by PKA occurs at positions 216 and 228. 3'-phosphoadenylyl sulfate-binding positions include 227-232 (TSFQEM) and 257-259 (RKG).

The protein belongs to the sulfotransferase 1 family. As to quaternary structure, homodimer.

The protein localises to the cytoplasm. It is found in the cytosol. The enzyme catalyses estrone + 3'-phosphoadenylyl sulfate = estrone 3-sulfate + adenosine 3',5'-bisphosphate + H(+). It catalyses the reaction (24S)-hydroxycholesterol + 3'-phosphoadenylyl sulfate = (24S)-hydroxycholesterol 3-sulfate + adenosine 3',5'-bisphosphate + H(+). The catalysed reaction is 17beta-estradiol + 3'-phosphoadenylyl sulfate = 17beta-estradiol 3-sulfate + adenosine 3',5'-bisphosphate + H(+). It carries out the reaction 3beta-hydroxyandrost-5-en-17-one + 3'-phosphoadenylyl sulfate = dehydroepiandrosterone 3-sulfate + adenosine 3',5'-bisphosphate + H(+). The enzyme catalyses 4-ethylphenol + 3'-phosphoadenylyl sulfate = 4-ethylphenyl sulfate + adenosine 3',5'-bisphosphate + H(+). Inhibited by estradiol. In terms of biological role, sulfotransferase that utilizes 3'-phospho-5'-adenylyl sulfate (PAPS) as sulfonate donor to catalyze the sulfate conjugation of estradiol and estrone. Is a key enzyme in estrogen homeostasis, the sulfation of estrogens leads to their inactivation. Also sulfates dehydroepiandrosterone (DHEA), pregnenolone, (24S)-hydroxycholesterol and xenobiotic compounds like ethinylestradiol, equalenin, diethyl stilbesterol and 1-naphthol at significantly lower efficiency. Does not sulfonate cortisol, testosterone and dopamine. May play a role in gut microbiota-host metabolic interaction. O-sulfonates 4-ethylphenol (4-EP), a dietary tyrosine-derived metabolite produced by gut bacteria. The product 4-EPS crosses the blood-brain barrier and may negatively regulate oligodendrocyte maturation and myelination, affecting the functional connectivity of different brain regions associated with the limbic system. This chain is Sulfotransferase 1E1 (SULT1E1), found in Bos taurus (Bovine).